A 229-amino-acid chain; its full sequence is MEISKVRIQDIPEEERPRERLIRNGPESLSNSELLGVILRTGSNKENVVSLSSRIFSEYSIKQLSLANVSRLMKVHGVGKAKAAQIAAVFELARRLETFVEEPKRKVCSPKDVYTLMYPKMREQKKEKFITLCLDTKNQILKEEVVSIGSLNASIVHPREVFKSALMESSASVIMIHNHPSGDPSPSREDIMVTEKMVEGGKLLGIDVLDHIIIGEGRYVSLKDEGFVR.

An MPN domain is found at lysine 106–valine 228. Zn(2+)-binding residues include histidine 177, histidine 179, and aspartate 190. Positions histidine 177 to aspartate 190 match the JAMM motif motif.

The protein belongs to the UPF0758 family.

The chain is UPF0758 protein Mbar_A2303 from Methanosarcina barkeri (strain Fusaro / DSM 804).